Consider the following 285-residue polypeptide: Malonyl-[acyl-carrier protein] O-methyltransferase (285 aa).

The protein belongs to the methyltransferase superfamily.

The catalysed reaction is malonyl-[ACP] + S-adenosyl-L-methionine = malonyl-[ACP] methyl ester + S-adenosyl-L-homocysteine. Its pathway is cofactor biosynthesis; biotin biosynthesis. Its function is as follows. Converts the free carboxyl group of a malonyl-thioester to its methyl ester by transfer of a methyl group from S-adenosyl-L-methionine (SAM). It allows to synthesize pimeloyl-ACP via the fatty acid synthetic pathway. This is Malonyl-[acyl-carrier protein] O-methyltransferase from Bacillus cytotoxicus (strain DSM 22905 / CIP 110041 / 391-98 / NVH 391-98).